The chain runs to 365 residues: Aminomethyltransferase (365 aa).

It belongs to the GcvT family. The glycine cleavage system is composed of four proteins: P, T, L and H.

It catalyses the reaction N(6)-[(R)-S(8)-aminomethyldihydrolipoyl]-L-lysyl-[protein] + (6S)-5,6,7,8-tetrahydrofolate = N(6)-[(R)-dihydrolipoyl]-L-lysyl-[protein] + (6R)-5,10-methylene-5,6,7,8-tetrahydrofolate + NH4(+). Functionally, the glycine cleavage system catalyzes the degradation of glycine. In Geobacillus thermodenitrificans (strain NG80-2), this protein is Aminomethyltransferase.